Reading from the N-terminus, the 941-residue chain is MAAYLQWRRFVFFEKELVKEPLGNDGAAPGAAPVSGSAASKFLCLPPGITVCDSGRGSLVFGDMEGQIWFLPRSLQLTGFQAYKLRVTHLYQLKQHNILASVGEDEEGINPLVKIWNLEKRDGGNPLCTRIFPAIPGTEPTVVSCLTVHENLNFMAIGFTDGSVTLNKGDITRDRHSKTQILHKGNYPVTGLAFRQAGKTTHLFVVTTENVQSYIVSGKDYPRVELDTHGCGLRCSALSDPSQDLQFIVAGDECVYLYQPDERGPCFAFEGHKLIVHWFRGYLVIVSRDRKVSPKSEFTSRDSQNSDKQILNIYDLCNKFIAYSAGFEDIVDVLAEWGSLYVLTRDGRVHALQEKDTQTKLEMLFKKNLFEMAINLAKSQHLDSDGLAQIFMQYGDHLYSKGNHDGAVQQYIRTIGKLEPSYVIRKFLDAQRIHNLTAYLQTLHRQSLANADHTTLLLNCYTKLKDSSKLEEFIKTKSESEVHFDVETAIKVLRQAGYYSHALYLAENHAHHEWYLKIQLEDIKNYQEALRYIGKLPFEQAESNMKRYGKTLMHHIPEQTTQLLKGLCTDYRPSLEGRGDREALSCRASSEEFIPIFANNPRELKAFLEHMSEVQPDSPQGIYDTLLELRLQNWAHEKDPQAKEKLHAEAISLLKSGRFCDVFDKALVLCQMHDFQDGVLYLYEQGKLFQQIMHYHMQHEQYRQVIAVCERHGEQEPSLWEQALSYFARKEEDCKEYVAAVLRHIENKSLMPPLLVVQTLAHNSTATLSIIRDYLVQKLQKQSQQIAQDELRVRRYREETTRIRQEIQELKASPKIFQKTKCSICNSALELPSVHFLCGHSFHQHCFESYSESDADCPTCLPENRKVMDMIRAQEQKRDLHDQFQHQLKCSNDSFSVIADYFGRGVFNKLTLLTDPPTARLTPSLEAGLQRDLLMHSRRGT.

N-acetylalanine is present on A2. 2 CHCR repeats span residues 411-561 (YIRT…EQTT) and 572-736 (RPSL…DCKE). Residues 772 to 813 (RDYLVQKLQKQSQQIAQDELRVRRYREETTRIRQEIQELKAS) are a coiled coil. S813 carries the post-translational modification Phosphoserine. The RING-type zinc finger occupies 822–861 (CSICNSALELPSVHFLCGHSFHQHCFESYSESDADCPTCL). At R904 the chain carries Omega-N-methylarginine. Phosphoserine is present on S924.

Belongs to the VPS11 family. In terms of assembly, core component of at least two putative endosomal tethering complexes, the homotypic fusion and vacuole protein sorting (HOPS) complex and the class C core vacuole/endosome tethering (CORVET) complex. Their common core is composed of the class C Vps proteins VPS11, VPS16, VPS18 and VPS33A, which in HOPS further associates with VPS39 and VPS41 and in CORVET with VPS8 and TGFBRAP1. Interacts with RAB5C. Interacts with TGFBRAP1, MON1B, STX7, STX17, ECPAS, EZR, RDX, MSN. Associates with adaptor protein complex 3 (AP-3) and clathrin:AP-3 complexes. Interacts with PLEKHM1.

The protein localises to the late endosome membrane. The protein resides in the lysosome membrane. It is found in the cytoplasmic vesicle. Its subcellular location is the early endosome. It localises to the autophagosome. The protein localises to the clathrin-coated vesicle. In terms of biological role, plays a role in vesicle-mediated protein trafficking to lysosomal compartments including the endocytic membrane transport and autophagic pathways. Believed to act as a core component of the putative HOPS and CORVET endosomal tethering complexes which are proposed to be involved in the Rab5-to-Rab7 endosome conversion probably implicating MON1A/B, and via binding SNAREs and SNARE complexes to mediate tethering and docking events during SNARE-mediated membrane fusion. The HOPS complex is proposed to be recruited to Rab7 on the late endosomal membrane and to regulate late endocytic, phagocytic and autophagic traffic towards lysosomes. The CORVET complex is proposed to function as a Rab5 effector to mediate early endosome fusion probably in specific endosome subpopulations. Required for fusion of endosomes and autophagosomes with lysosomes. Involved in cargo transport from early to late endosomes and required for the transition from early to late endosomes. This is Vacuolar protein sorting-associated protein 11 homolog (Vps11) from Mus musculus (Mouse).